The primary structure comprises 257 residues: MLIVVSPAKTLDYESPLVTSRFTQPELLDHSAELIGRARQLSPDQIASLMKISDKLAGLNAARFADWQPDFSPANARQALLAFKGDVYTGLAVEDFSEADLDFAQAHLRMLSGLYGVLRPLDLMMPYRLEMGIRLDNGRGKDLYQFWGDIITAHLNKALAAQGDEVLINLASDEYFKSVRPKALQGRIITPVFKDEKNGQFKIISFYAKKARGMMARHIIKHRLTKVEQLTGFNADGYYFVAEESDANTLMFKRAEN.

It belongs to the UPF0246 family.

In Aeromonas hydrophila subsp. hydrophila (strain ATCC 7966 / DSM 30187 / BCRC 13018 / CCUG 14551 / JCM 1027 / KCTC 2358 / NCIMB 9240 / NCTC 8049), this protein is UPF0246 protein AHA_3667.